We begin with the raw amino-acid sequence, 39 residues long: MSAVDFLERLIKAGVYIYVLRTKCVIAALLVKNYSIKDE.

This sequence belongs to the orthopoxvirus A30.5 protein family.

This is an uncharacterized protein from Bos taurus (Bovine).